The following is a 335-amino-acid chain: Sphingomyelinase C (335 aa).

Residues 1–28 (MEKFKIIKTIPKICGAFIFLLFFTFLFG) form the signal peptide.

Belongs to the neutral sphingomyelinase family.

The protein resides in the secreted. The enzyme catalyses a sphingomyelin + H2O = phosphocholine + an N-acylsphing-4-enine + H(+). In terms of biological role, virulence factor that promotes intracellular proliferation by mediating the disruption of the phagocytic vacuole and the release of bacteria into the host cell cytosol. May act in concert with the phospholipases PlcA and PlcB and the hemolysin hly to mediate efficient escape from the vacuole. In Listeria ivanovii, this protein is Sphingomyelinase C (smcL).